The chain runs to 252 residues: Proteasome subunit alpha type-3 (252 aa).

Belongs to the peptidase T1A family. The 26S proteasome consists of a 20S proteasome core and two 19S regulatory subunits. The 20S proteasome core is composed of 28 subunits that are arranged in four stacked rings, resulting in a barrel-shaped structure. The two end rings are each formed by seven alpha subunits, and the two central rings are each formed by seven beta subunits. The catalytic chamber with the active sites is on the inside of the barrel.

The protein localises to the cytoplasm. It localises to the nucleus. Functionally, the proteasome is a multicatalytic proteinase complex which is characterized by its ability to cleave peptides with Arg, Phe, Tyr, Leu, and Glu adjacent to the leaving group at neutral or slightly basic pH. The proteasome has an ATP-dependent proteolytic activity. In Acanthamoeba castellanii (Amoeba), this protein is Proteasome subunit alpha type-3.